The primary structure comprises 576 residues: MKASKYILPTEKENPSDAVVASHRLMIRAGLARKSSAGLYFYLPLGLKILQKIKQIIREEMNKTGALEFDLPILTPSDFWEQSGRWTAMGKEMFRIKDRHDLSYALGPTHEESFSFLLKPLLKSYKDLPLNVYQIQTKFRDEIRPRFGVIRSREFIMKDAYSFHIDDVSLDETYQSMRAAYRKIFDRCGLKTIPVQADSGSMGGSASEEFMVVSPIGEETLLLCNSCGYSSNSEKTPLVLKKENVSSASVEKKEISTPGKKTIVEVSAFLEIPESTTIKAVTLKSEKKKILVYLRGDLELNLHKLHSLLRIVDSEPMTDAEIRELGLVPGFIAPVAPNDKVKVLYDRSLQKDFPYVVASNKEDFHTQGFVLEKEVSGLPEFADVALAREGDLCPNCNAPLKAEKGIEVGHIFKLGEKYTKAFGIQVLDQNGKARTLTMGCYGIGVNRTMATVIEQRNDEKGIFWPISIAPFEVTLVSITKGEEQYSKAEEFYNVLKNENLEVFWDDRDVGPGFKLKDSELIGFPIRVTIGKKFFENGEISIYNRKADKEESFVFAGFENLIARVESLRQELFAELE.

Belongs to the class-II aminoacyl-tRNA synthetase family. ProS type 1 subfamily. In terms of assembly, homodimer.

The protein resides in the cytoplasm. The catalysed reaction is tRNA(Pro) + L-proline + ATP = L-prolyl-tRNA(Pro) + AMP + diphosphate. Catalyzes the attachment of proline to tRNA(Pro) in a two-step reaction: proline is first activated by ATP to form Pro-AMP and then transferred to the acceptor end of tRNA(Pro). As ProRS can inadvertently accommodate and process non-cognate amino acids such as alanine and cysteine, to avoid such errors it has two additional distinct editing activities against alanine. One activity is designated as 'pretransfer' editing and involves the tRNA(Pro)-independent hydrolysis of activated Ala-AMP. The other activity is designated 'posttransfer' editing and involves deacylation of mischarged Ala-tRNA(Pro). The misacylated Cys-tRNA(Pro) is not edited by ProRS. The sequence is that of Proline--tRNA ligase from Leptospira borgpetersenii serovar Hardjo-bovis (strain JB197).